A 442-amino-acid chain; its full sequence is GTPase HflX (442 aa).

The Hflx-type G domain maps to 186-362; that stretch reads VLVALAGYTN…ALNRVVLKLP (177 aa). Residues 192–199, 217–221, 238–241, 306–309, and 341–343 each bind GTP; these read GYTNAGKS, FTTLD, DTVG, NKID, and SAR. Positions 199 and 219 each coordinate Mg(2+).

The protein belongs to the TRAFAC class OBG-HflX-like GTPase superfamily. HflX GTPase family. As to quaternary structure, monomer. Associates with the 50S ribosomal subunit. Mg(2+) is required as a cofactor.

It localises to the cytoplasm. Its function is as follows. GTPase that associates with the 50S ribosomal subunit and may have a role during protein synthesis or ribosome biogenesis. The sequence is that of GTPase HflX from Thermococcus kodakarensis (strain ATCC BAA-918 / JCM 12380 / KOD1) (Pyrococcus kodakaraensis (strain KOD1)).